The chain runs to 330 residues: MLSTKRLRVLELYSGIGGMHYALNLANIPADIVCAIDINPQANEIYNLNHGKLAKHMDISTLTAKDFDAFDCKLWTMSPSCQPFTRIGNRKDILDPRSQAFLNILNVLPHVNNLPEYILIENVQGFEESKAAEECRKVLRNCGYNLIEGILSPNQFNIPNSRSRWYGLARLNFKGEWSIDDVFQFSEVAQKEGEVKRIRDYLEIERDWSSYMVLESVLNKWGHQFDIVKPDSSSCCCFTRGYTHLVQGAGSILQMSDHENTHEQFERNRMALQLRYFTAREVARLMGFPESLEWSKSNVTEKCMYRLLGNSINVKVVSYLISLLLEPLNF.

Positions 7–330 (LRVLELYSGI…ISLLLEPLNF (324 aa)) constitute an SAM-dependent MTase C5-type domain. C81 is a catalytic residue.

Belongs to the class I-like SAM-binding methyltransferase superfamily. C5-methyltransferase family.

It is found in the cytoplasm. Its subcellular location is the nucleus. It carries out the reaction cytidine(38) in tRNA + S-adenosyl-L-methionine = 5-methylcytidine(38) in tRNA + S-adenosyl-L-homocysteine + H(+). Specifically methylates cytosine 38 in the anticodon loop of tRNA(Asp). Can also methylate cytosine 38 in tRNA(Glu), albeit to a lower level, but not tRNA(Lys). Pmt1-dependent tRNA methylation is induced by nitrogen limitation and depends on the nutrient-sensing protein kinase sck2. Does not have DNA-methylation activity. In Schizosaccharomyces pombe (strain 972 / ATCC 24843) (Fission yeast), this protein is tRNA (cytosine(38)-C(5))-methyltransferase (pmt1).